Here is a 517-residue protein sequence, read N- to C-terminus: MPSLENPTFQNEARLLLVSNRLPITIKRSDDGRYDFSMSSGGLVSGLSGLSKSTTFQWYGWPGLEVPEEEIPVVKERLKQEYNAVPVFIDDELADRHYNGFSNSILWPLFHYHPGEITFDESAWEAYKEANRLFAKAVAKEVQDGDLIWVHDYHLMLLPEMLREEIGDSKENVKIGFFLHTPFPSSEIYRILPVRNELLLGVLHCDLIGFHTYDYTRHFLSACSRLLGLTTTPNGIEFQGKIIACGAFPIGIDPEKFEEGLKKEKVQKRIAMLEQKFQGVKLMVGVDRLDYIKGVPQKLHALEVFLSDHPEWVGKVVLVQVAVPSRQDVEEYQNLRAVVNELVGRINGKFGTVEFMPIHFLHKSVNFDELIALYAVSDACIVSSTRDGMNLVAYEYIATQKKRHGVLVLSEFAGAAQSLNGSIIINPWNTEELAGAYQEAVTMSDEQRALNFSKLDKYVNKYTSAFWGQSFVTELTRISEHSAEKFHAKKASFSDNNSENGEPSNGVETPAQEQVAQ.

2 residues coordinate D-glucose 6-phosphate: Tyr98 and Asp152. 2 residues coordinate UDP: Arg288 and Lys293. UDP-alpha-D-glucose-binding residues include Arg288 and Lys293. D-glucose 6-phosphate is bound at residue Arg326. Asp387–Glu395 lines the UDP-alpha-D-glucose pocket. A UDP-binding site is contributed by Leu391–Glu395. The tract at residues Phe486–Gln517 is disordered. Over residues Phe493 to Gln517 the composition is skewed to polar residues.

It belongs to the glycosyltransferase 20 family.

The catalysed reaction is D-glucose 6-phosphate + UDP-alpha-D-glucose = alpha,alpha-trehalose 6-phosphate + UDP + H(+). It functions in the pathway carbohydrate biosynthesis. In terms of biological role, synthase catalytic subunit of the trehalose synthase complex that catalyzes the production of trehalose from glucose-6-phosphate and UDP-alpha-D-glucose in a two step process. The polypeptide is Alpha,alpha-trehalose-phosphate synthase [UDP-forming] 1 (Aspergillus niger).